Here is a 284-residue protein sequence, read N- to C-terminus: Phosphoenolpyruvate guanylyltransferase (284 aa).

Positions 94 to 123 are disordered; sequence ADLSADEPAGTDAERRADPSAENRASTSAQ. The span at 105–114 shows a compositional bias: basic and acidic residues; the sequence is DAERRADPSA. Residues T203, G219, and S222 each coordinate phosphoenolpyruvate.

Belongs to the CofC family.

It catalyses the reaction phosphoenolpyruvate + GTP + H(+) = enolpyruvoyl-2-diphospho-5'-guanosine + diphosphate. It functions in the pathway cofactor biosynthesis; coenzyme F420 biosynthesis. In terms of biological role, guanylyltransferase that catalyzes the activation of phosphoenolpyruvate (PEP) as enolpyruvoyl-2-diphospho-5'-guanosine, via the condensation of PEP with GTP. It is involved in the biosynthesis of coenzyme F420, a hydride carrier cofactor. The polypeptide is Phosphoenolpyruvate guanylyltransferase (Sanguibacter keddieii (strain ATCC 51767 / DSM 10542 / NCFB 3025 / ST-74)).